We begin with the raw amino-acid sequence, 390 residues long: MVFRQAPVELPGLAPMPGQPFGVYLHVPFCLTRCGYCDFNTYTPAQLGGVSPDRWLLALRAELELAAAKLDAPTVHTVYVGGGTPSLLGGERLATLLDMVRDHFVLAPDAEVSTEANPESTWPEFFATIRAAGYTRVSLGMQSVAPRVLATLDRVHSPGRAAAAATEAIAEGFTHVNLDLIYGTPGESDDDLVRSVDAAVQAGVDHVSAYALVVEHGTALARRVRRGELAAPDDDVLAHRYELVDARLSAAGFAWYEVSNWCRPGGECRHNLGYWDGGQWWGAGPGAHGYIGVTRWWNVKHPNTYAEILAGATLPVAGFEQLGADALHTEDVLLKVRLRQGLPLARLGAAERERAEAVLADGLLDYHGDRLVLTGRGRLLADAVVRTLLG.

One can recognise a Radical SAM core domain in the interval 15 to 254; sequence PMPGQPFGVY…DARLSAAGFA (240 aa). Residue Y24 coordinates S-adenosyl-L-methionine. 3 residues coordinate [4Fe-4S] cluster: C30, C34, and C37. Residues G82, 83–84, E115, Q142, R154, and D179 contribute to the S-adenosyl-L-methionine site; that span reads GT.

The protein belongs to the anaerobic coproporphyrinogen-III oxidase family. HemW subfamily. Requires [4Fe-4S] cluster as cofactor.

It localises to the cytoplasm. Probably acts as a heme chaperone, transferring heme to an unknown acceptor. Binds one molecule of heme per monomer, possibly covalently. Binds 1 [4Fe-4S] cluster. The cluster is coordinated with 3 cysteines and an exchangeable S-adenosyl-L-methionine. The polypeptide is Heme chaperone HemW (Mycobacterium tuberculosis (strain CDC 1551 / Oshkosh)).